A 290-amino-acid chain; its full sequence is 4-hydroxybenzoate octaprenyltransferase (290 aa).

The next 6 membrane-spanning stretches (helical) occupy residues 41–61 (WPLL…GCAM), 89–109 (WEAV…IQPL), 133–153 (FFAI…PMAF), 158–178 (DTVP…SVAY), 202–224 (FGRF…YVWI), and 269–289 (WLGG…GTAG).

Belongs to the UbiA prenyltransferase family. It depends on Mg(2+) as a cofactor.

The protein resides in the cell inner membrane. The enzyme catalyses all-trans-octaprenyl diphosphate + 4-hydroxybenzoate = 4-hydroxy-3-(all-trans-octaprenyl)benzoate + diphosphate. It participates in cofactor biosynthesis; ubiquinone biosynthesis. In terms of biological role, catalyzes the prenylation of para-hydroxybenzoate (PHB) with an all-trans polyprenyl group. Mediates the second step in the final reaction sequence of ubiquinone-8 (UQ-8) biosynthesis, which is the condensation of the polyisoprenoid side chain with PHB, generating the first membrane-bound Q intermediate 3-octaprenyl-4-hydroxybenzoate. The polypeptide is 4-hydroxybenzoate octaprenyltransferase (Burkholderia ambifaria (strain ATCC BAA-244 / DSM 16087 / CCUG 44356 / LMG 19182 / AMMD) (Burkholderia cepacia (strain AMMD))).